The following is a 163-amino-acid chain: Nucleotide-binding protein APJL_1242 (163 aa).

The protein belongs to the YajQ family.

Nucleotide-binding protein. This Actinobacillus pleuropneumoniae serotype 3 (strain JL03) protein is Nucleotide-binding protein APJL_1242.